A 309-amino-acid chain; its full sequence is Probable (S)-ureidoglycine aminohydrolase (309 aa).

Positions 1–22 (MMLPRLLLLVVASALPLASVAA) are cleaved as a signal peptide. Glu245, His247, His251, and Gln285 together coordinate Mn(2+). Glu245 serves as a coordination point for substrate. The substrate site is built by Gln285, Tyr297, and Lys301.

The protein belongs to the UGHY family. Homooctamer. Mn(2+) is required as a cofactor.

Its subcellular location is the endoplasmic reticulum. The enzyme catalyses (S)-2-ureidoglycine + H2O = (S)-ureidoglycolate + NH4(+). In terms of biological role, involved in the catabolism of purine nucleotides. The sequential activity of AAH, UGLYAH and UAH allows a complete purine breakdown without the intermediate generation of urea. This chain is Probable (S)-ureidoglycine aminohydrolase (UGLYAH), found in Oryza sativa subsp. japonica (Rice).